The following is a 96-amino-acid chain: (4S)-4-hydroxy-5-phosphonooxypentane-2,3-dione isomerase (96 aa).

In terms of domain architecture, ABM spans 2 to 91 (HVTLVEINVH…MTGPRKKRLF (90 aa)).

This sequence belongs to the LsrG family. In terms of assembly, homodimer.

Its subcellular location is the cytoplasm. The enzyme catalyses (2S)-2-hydroxy-3,4-dioxopentyl phosphate = 3-hydroxy-2,4-dioxopentyl phosphate. Involved in the degradation of phospho-AI-2, thereby terminating induction of the lsr operon and closing the AI-2 signaling cycle. Catalyzes the conversion of (4S)-4-hydroxy-5-phosphonooxypentane-2,3-dione (P-DPD) to 3-hydroxy-5-phosphonooxypentane-2,4-dione (P-HPD). This is (4S)-4-hydroxy-5-phosphonooxypentane-2,3-dione isomerase from Shigella flexneri serotype 5b (strain 8401).